The following is a 283-amino-acid chain: Thymidylate synthase (283 aa).

Arginine 22 serves as a coordination point for dUMP. Cysteine 160 functions as the Nucleophile in the catalytic mechanism. Residues 180-183 (RSCD), asparagine 191, and 221-223 (HIY) contribute to the dUMP site. Aspartate 183 lines the (6R)-5,10-methylene-5,6,7,8-tetrahydrofolate pocket. Serine 282 contacts (6R)-5,10-methylene-5,6,7,8-tetrahydrofolate.

It belongs to the thymidylate synthase family. Bacterial-type ThyA subfamily. As to quaternary structure, homodimer.

It localises to the cytoplasm. The enzyme catalyses dUMP + (6R)-5,10-methylene-5,6,7,8-tetrahydrofolate = 7,8-dihydrofolate + dTMP. It participates in pyrimidine metabolism; dTTP biosynthesis. Catalyzes the reductive methylation of 2'-deoxyuridine-5'-monophosphate (dUMP) to 2'-deoxythymidine-5'-monophosphate (dTMP) while utilizing 5,10-methylenetetrahydrofolate (mTHF) as the methyl donor and reductant in the reaction, yielding dihydrofolate (DHF) as a by-product. This enzymatic reaction provides an intracellular de novo source of dTMP, an essential precursor for DNA biosynthesis. This chain is Thymidylate synthase, found in Vibrio vulnificus (strain CMCP6).